The primary structure comprises 180 residues: MAALDLRAELDSLVLQLLGDLEELEGKRTVLNARVEEGWLSLAKARYAMGAKSVGPLQYASHMEPQVCLHASEAQEGLQKFKVVRAGVHAPEEVGPREAGLRRRKGPTKTPEPESSEAPQDPLNWFGILVPHSLRQAQASFRDGLQLAADIASLQNRIDWGRSQLRGLQEKLKQLEPGAA.

Residues 16–37 are a coiled coil; sequence QLLGDLEELEGKRTVLNARVEE. Residues 92-101 are compositionally biased toward basic and acidic residues; that stretch reads EEVGPREAGL. The interval 92-122 is disordered; it reads EEVGPREAGLRRRKGPTKTPEPESSEAPQDP. Positions 153 to 176 form a coiled coil; sequence SLQNRIDWGRSQLRGLQEKLKQLE.

Accessory component of the multisubunit proton-transporting vacuolar (V)-ATPase protein pump. In terms of tissue distribution, expressed throughout the brain.

Its subcellular location is the endosome. It localises to the lysosome. The protein resides in the endoplasmic reticulum-Golgi intermediate compartment. It is found in the cytoplasmic vesicle. The protein localises to the COPI-coated vesicle. Its subcellular location is the endoplasmic reticulum. Accessory component of the proton-transporting vacuolar (V)-ATPase protein pump involved in intracellular iron homeostasis. In aerobic conditions, required for intracellular iron homeostasis, thus triggering the activity of Fe(2+) prolyl hydroxylase (PHD) enzymes, and leading to HIF1A hydroxylation and subsequent proteasomal degradation. Necessary for endolysosomal acidification and lysosomal degradation. May be involved in Golgi homeostasis. The protein is Vacuolar ATPase assembly protein VMA22 of Homo sapiens (Human).